Reading from the N-terminus, the 528-residue chain is UDP-glucuronosyltransferase 2A2 (528 aa).

The signal sequence occupies residues 1 to 21; it reads MIKKVLQLLIFHLTLAEIVLS. Topologically, residues 22-494 are extracellular; sequence GNVVVWPTDG…FQYHSLDVIG (473 aa). Residues Asn48 and Asn314 are each glycosylated (N-linked (GlcNAc...) asparagine). The helical transmembrane segment at 495 to 515 threads the bilayer; that stretch reads FLLACVASAILLVAKCCLFIF. Topologically, residues 516–528 are cytoplasmic; it reads QKVGKTGKKKKRD.

Belongs to the UDP-glycosyltransferase family.

The protein resides in the membrane. It catalyses the reaction glucuronate acceptor + UDP-alpha-D-glucuronate = acceptor beta-D-glucuronoside + UDP + H(+). The catalysed reaction is 17alpha-estradiol + UDP-alpha-D-glucuronate = 17alpha-estradiol 3-O-(beta-D-glucuronate) + UDP + H(+). The enzyme catalyses 17beta-estradiol + UDP-alpha-D-glucuronate = 17beta-estradiol 3-O-(beta-D-glucuronate) + UDP + H(+). It carries out the reaction chenodeoxycholate + UDP-alpha-D-glucuronate = chenodeoxycholoyl-24-O-(beta-D-glucuronate) + UDP. It catalyses the reaction lithocholate + UDP-alpha-D-glucuronate = lithocholoyl-24-O-(beta-D-glucuronate) + UDP. The catalysed reaction is deoxycholate + UDP-alpha-D-glucuronate = deoxycholoyl-24-O-(beta-D-glucuronate) + UDP. The enzyme catalyses hyocholate + UDP-alpha-D-glucuronate = hyocholoyl-24-O-(beta-D-glucuronate) + UDP. It carries out the reaction hyodeoxycholate + UDP-alpha-D-glucuronate = hyodeoxycholate 6-O-(beta-D-glucuronate) + UDP + H(+). UDP-glucuronosyltransferase (UGT) that catalyzes phase II biotransformation reactions in which lipophilic substrates are conjugated with glucuronic acid to increase the metabolite's water solubility, thereby facilitating excretion into either the urine or bile. Essential for the elimination and detoxification of drugs, xenobiotics and endogenous compounds. Catalyzes the glucuronidation of endogenous estrogen hormone estradiol. Contributes to bile acid (BA) detoxification by catalyzing the glucuronidation of BA substrates, which are natural detergents for dietary lipids absorption. Potential role in detoxification of toxic waste compounds in the amniotic fluid before birth, and air-born chemical after birth. This Mus musculus (Mouse) protein is UDP-glucuronosyltransferase 2A2.